Consider the following 421-residue polypeptide: Histidine--tRNA ligase (421 aa).

This sequence belongs to the class-II aminoacyl-tRNA synthetase family. As to quaternary structure, homodimer.

The protein localises to the cytoplasm. The catalysed reaction is tRNA(His) + L-histidine + ATP = L-histidyl-tRNA(His) + AMP + diphosphate + H(+). In Natranaerobius thermophilus (strain ATCC BAA-1301 / DSM 18059 / JW/NM-WN-LF), this protein is Histidine--tRNA ligase.